The chain runs to 114 residues: Phosphoribosyl-AMP cyclohydrolase (114 aa).

Position 80 (Asp80) interacts with Mg(2+). Residue Cys81 coordinates Zn(2+). Asp82 and Asp84 together coordinate Mg(2+). Zn(2+) is bound by residues Cys97 and Cys104.

This sequence belongs to the PRA-CH family. Homodimer. Mg(2+) is required as a cofactor. The cofactor is Zn(2+).

Its subcellular location is the cytoplasm. It catalyses the reaction 1-(5-phospho-beta-D-ribosyl)-5'-AMP + H2O = 1-(5-phospho-beta-D-ribosyl)-5-[(5-phospho-beta-D-ribosylamino)methylideneamino]imidazole-4-carboxamide. The protein operates within amino-acid biosynthesis; L-histidine biosynthesis; L-histidine from 5-phospho-alpha-D-ribose 1-diphosphate: step 3/9. Its function is as follows. Catalyzes the hydrolysis of the adenine ring of phosphoribosyl-AMP. This is Phosphoribosyl-AMP cyclohydrolase from Rhodococcus jostii (strain RHA1).